Consider the following 267-residue polypeptide: Phosphate import ATP-binding protein PstB (267 aa).

Residues 21–262 (VAARNLDFYY…PSKQQTEDYI (242 aa)) form the ABC transporter domain. Position 53-60 (53-60 (GPSGCGKS)) interacts with ATP.

Belongs to the ABC transporter superfamily. Phosphate importer (TC 3.A.1.7) family. In terms of assembly, the complex is composed of two ATP-binding proteins (PstB), two transmembrane proteins (PstC and PstA) and a solute-binding protein (PstS).

The protein localises to the cell inner membrane. It catalyses the reaction phosphate(out) + ATP + H2O = ADP + 2 phosphate(in) + H(+). In terms of biological role, part of the ABC transporter complex PstSACB involved in phosphate import. Responsible for energy coupling to the transport system. This is Phosphate import ATP-binding protein PstB from Xanthomonas axonopodis pv. citri (strain 306).